The sequence spans 251 residues: Probable transcriptional regulatory protein jk1057 (251 aa).

The interval 1–22 (MAGHSKWATTKHKKAANDAKRG) is disordered.

This sequence belongs to the TACO1 family.

It localises to the cytoplasm. In Corynebacterium jeikeium (strain K411), this protein is Probable transcriptional regulatory protein jk1057.